A 265-amino-acid polypeptide reads, in one-letter code: WUSCHEL-related homeobox 3B (265 aa).

The homeobox; WUS-type DNA-binding region spans 4–68; the sequence is TPSTRWCPTP…NHKARERQRL (65 aa). 2 disordered regions span residues 77–107 and 242–265; these read QQQYAQQQQQATAAAPASSPNSSATLLAPPA and PTKSTGLKDECSSSKSSSCSTSTN. The segment covering 254-265 has biased composition (low complexity); sequence SSKSSSCSTSTN.

The protein belongs to the WUS homeobox family. As to expression, predominantly expressed in tissues enriched for shoot meristems and young lateral organ primordia. First expressed in lateral domains of shoot meristems. It is then expressed in the margins of young lateral organ primordia. Not expressed in roots, seedling leaves or fully expanded coleoptiles. Also expressed in vegetative shoot apices (five leaf primordia and the SAM) and in the male inflorescence. Expressed at high level in the female inflorescence.

Its subcellular location is the nucleus. Functionally, probable transcription factor required to initiate organ founder cells in a lateral domain of shoot meristems. Involved in leaf formation. The chain is WUSCHEL-related homeobox 3B (WOX3B) from Zea mays (Maize).